The primary structure comprises 503 residues: MHRVMGIETEYGISVPHQPNANAMAASSQVVNAYAPIGAPAQRQARWDFEEENPLRDARGFEVAREAADPSQLTDEDLGLANVILTNGARLYVDHAHPEYSTPEVTNPRDAVLWDKAGERIMAEAARRAADLPMGWTIQLYKNNTDNKGASYGCHENYLMNRSTPFADIVRHLIPFFVTRQVFCGAGRVGIGADGRGEGFQLSQRADFFEVEVGLETTLKRPIINTRDEPHADPEKYRRLHVIIGDANMSEIATYLKLGTTALVLAMIEDGFLSQDFSVESPVGALRAVSHDPTLRYQLRLHDGRRLTAVQLQMEYLEQARKYVEDRFGTDVDDMTRDVLDRWETTLVRLADDPMQLSRDLDWVAKLSILEGYRQRENLPWSAHKLQLVDLQYHDVRPDRGLYNRLVARGRMNLLVDEAAVRTAMHEPPNDTRAYFRGRCLAKFGAEIAAASWDSVIFDLPGRDSLQRVPTLEPLRGTRAHVGDLLDRCRSATELVAALTGGR.

Glu8 and Tyr92 together coordinate Mg(2+). The Proton acceptor role is filled by Asp94. Glu99 is a Mg(2+) binding site. ATP is bound at residue 101 to 102 (ST). Position 155 (His155) interacts with Mg(2+). Asn157 and Arg239 together coordinate ATP. Residue His241 coordinates Mg(2+).

This sequence belongs to the Pup ligase/Pup deamidase family. Pup deamidase subfamily. Likely interacts with the C-terminal half of the prokaryotic ubiquitin-like protein Pup. It depends on ATP as a cofactor.

It participates in protein degradation; proteasomal Pup-dependent pathway. Functionally, displays depupylase (DPUP) activity, removing conjugated Pup from target proteins; is thus involved in the recycling of Pup and may function similarly to deubiquitinases (DUBs) in eukaryotes to prevent or promote proteasomal degradation of certain proteins. Is also able to catalyze the deamidation of the C-terminal glutamine to glutamate in a variant of the prokaryotic ubiquitin-like protein Pup; however, since Pup from A.cellulolyticus possesses a C-terminal glutamate, this deamidase activity may be of no significance in vivo. The sequence is that of Depupylase (dop) from Acidothermus cellulolyticus (strain ATCC 43068 / DSM 8971 / 11B).